We begin with the raw amino-acid sequence, 168 residues long: Shikimate kinase (168 aa).

An ATP-binding site is contributed by 11–16; it reads GAGKTT. Position 15 (Thr-15) interacts with Mg(2+). Substrate contacts are provided by Asp-33, Arg-57, and Gly-78. Residue Arg-118 participates in ATP binding. Arg-136 provides a ligand contact to substrate. Arg-153 contributes to the ATP binding site.

It belongs to the shikimate kinase family. Monomer. The cofactor is Mg(2+).

It localises to the cytoplasm. The catalysed reaction is shikimate + ATP = 3-phosphoshikimate + ADP + H(+). Its pathway is metabolic intermediate biosynthesis; chorismate biosynthesis; chorismate from D-erythrose 4-phosphate and phosphoenolpyruvate: step 5/7. In terms of biological role, catalyzes the specific phosphorylation of the 3-hydroxyl group of shikimic acid using ATP as a cosubstrate. This chain is Shikimate kinase, found in Enterococcus faecalis (strain ATCC 700802 / V583).